A 72-amino-acid chain; its full sequence is uncharacterized protein (72 aa).

This is an uncharacterized protein from Acidianus filamentous virus 2 (isolate Italy/Pozzuoli) (AFV-2).